Consider the following 473-residue polypeptide: ATP synthase subunit beta (473 aa).

158–165 lines the ATP pocket; sequence GGAGVGKT.

The protein belongs to the ATPase alpha/beta chains family. In terms of assembly, F-type ATPases have 2 components, CF(1) - the catalytic core - and CF(0) - the membrane proton channel. CF(1) has five subunits: alpha(3), beta(3), gamma(1), delta(1), epsilon(1). CF(0) has three main subunits: a(1), b(2) and c(9-12). The alpha and beta chains form an alternating ring which encloses part of the gamma chain. CF(1) is attached to CF(0) by a central stalk formed by the gamma and epsilon chains, while a peripheral stalk is formed by the delta and b chains.

It is found in the cell membrane. It catalyses the reaction ATP + H2O + 4 H(+)(in) = ADP + phosphate + 5 H(+)(out). Its function is as follows. Produces ATP from ADP in the presence of a proton gradient across the membrane. The catalytic sites are hosted primarily by the beta subunits. The sequence is that of ATP synthase subunit beta from Priestia megaterium (strain ATCC 12872 / QMB1551) (Bacillus megaterium).